A 640-amino-acid chain; its full sequence is Epithelial sodium channel subunit beta (640 aa).

The Cytoplasmic portion of the chain corresponds to 1-50 (MHVKKYLLKGLHRLQKGPGYTYKELLVWYCDNTNTHGPKRIICEGPKKKA). The helical transmembrane segment at 51-71 (MWFLLTLLFAALVCWQWGIFI) threads the bilayer. Residues 72–532 (RTYLSWEVSV…GGQFGFWMGG (461 aa)) lie on the Extracellular side of the membrane. Cystine bridges form between Cys-98–Cys-272, Cys-184–Cys-189, Cys-196–Cys-203, Cys-249–Cys-256, Cys-361–Cys-448, Cys-386–Cys-444, Cys-390–Cys-440, Cys-399–Cys-426, and Cys-401–Cys-415. Asn-260 carries N-linked (GlcNAc...) asparagine glycosylation. Residues 533–553 (SVLCLIEFGEIIIDFVWITII) traverse the membrane as a helical segment. The Cytoplasmic portion of the chain corresponds to 554–640 (KLVALAKSLR…IESDSEGDAI (87 aa)). The disordered stretch occupies residues 590 to 640 (FQPDTAPRSPNTGPYPSEQALPIPGTPPPNYDSLRLQPLDVIESDSEGDAI). The PY motif; recruits WW domain-containing proteins and is thereby required for ubiquitination and inhibition of the channel by NEDD4 and NEDD4L motif lies at 616–620 (PPPNY). Over residues 631–640 (IESDSEGDAI) the composition is skewed to acidic residues. Residues Ser-633 and Ser-635 each carry the phosphoserine modification.

It belongs to the amiloride-sensitive sodium channel (TC 1.A.6) family. SCNN1B subfamily. As to quaternary structure, component of the heterotrimeric epithelial sodium channel (ENaC) composed of an alpha/SCNN1A, a beta/SCNN1B and a gamma/SCNN1G subunit. An additional delta/SCNN1D subunit can replace the alpha/SCNN1A subunit to form an alternative channel with specific properties. Interacts with WWP1 (via WW domains). Interacts with WWP2 (via WW domains); inhibits the channel. Interacts with the full-length immature form of PCSK9 (pro-PCSK9); inhibits ENaC by promoting its proteasomal degradation. Interacts (N-glycosylated) with BPIFA1; the interaction is direct and inhibits the proteolytic processing of SCNN1A and SCNN1G and the activation of ENaC. Post-translationally, ubiquitinated. Can be ubiquitinated at multiple sites and undergo monoubiquitination and polyubiquitination. Ubiquitination by NEDD4 or NEDD4L inhibits the ENaC channel through endocytosis, intracellular retention and degradation of its individual subunits. However, some studies could not confirm the ubiquitination of this subunit of the ENaC. In terms of processing, phosphorylated on serine and threonine residues. Aldosterone and insulin increase the basal level of phosphorylation. N-glycosylated. N-glycosylation is required for interaction with BPIFA1. In terms of tissue distribution, detected in placenta, lung and kidney. Expressed in kidney (at protein level).

The protein resides in the apical cell membrane. Its subcellular location is the cytoplasmic vesicle membrane. The catalysed reaction is Na(+)(in) = Na(+)(out). Its activity is regulated as follows. Originally identified and characterized by its inhibition by the diuretic drug amiloride. Functionally, this is one of the three pore-forming subunits of the heterotrimeric epithelial sodium channel (ENaC), a critical regulator of sodium balance and fluid homeostasis. ENaC operates in epithelial tissues, where it mediates the electrodiffusion of sodium ions from extracellular fluid through the apical membrane of cells, with water following osmotically. It plays a key role in maintaining sodium homeostasis through electrogenic sodium reabsorption in the kidneys. Additionally, ENaC is essential for airway surface liquid homeostasis, which is crucial for proper mucus clearance. The protein is Epithelial sodium channel subunit beta of Homo sapiens (Human).